A 98-amino-acid polypeptide reads, in one-letter code: Co-chaperonin GroES (98 aa).

The interval Glu35–Val57 is disordered.

It belongs to the GroES chaperonin family. As to quaternary structure, heptamer of 7 subunits arranged in a ring. Interacts with the chaperonin GroEL.

The protein resides in the cytoplasm. Functionally, together with the chaperonin GroEL, plays an essential role in assisting protein folding. The GroEL-GroES system forms a nano-cage that allows encapsulation of the non-native substrate proteins and provides a physical environment optimized to promote and accelerate protein folding. GroES binds to the apical surface of the GroEL ring, thereby capping the opening of the GroEL channel. This chain is Co-chaperonin GroES, found in Cutibacterium acnes (strain DSM 16379 / KPA171202) (Propionibacterium acnes).